Reading from the N-terminus, the 199-residue chain is Outer dense fiber protein 4 (199 aa).

Residues 1–14 (MNIRSLERAGRAGK) are compositionally biased toward basic and acidic residues. The disordered stretch occupies residues 1-25 (MNIRSLERAGRAGKQDGVAVSPGQE). Ser-53 carries the post-translational modification Phosphoserine. The next 3 membrane-spanning stretches (helical) occupy residues 68–88 (IAQVLASELSLLAFILLVVMV), 109–128 (VTTKIYTSVHIMSLGLLHIY), and 159–179 (LALGLGIILTIWLHLPYIPGL).

It localises to the membrane. Functionally, component of the outer dense fibers (ODF) of spermatozoa which could be involved in sperm tail structure, sperm movement and general organization of cellular cytoskeleton. This chain is Outer dense fiber protein 4 (ODF4), found in Bos taurus (Bovine).